Here is a 215-residue protein sequence, read N- to C-terminus: DNA repair and recombination protein RadB (215 aa).

The protein belongs to the eukaryotic RecA-like protein family. RadB subfamily.

Involved in DNA repair and in homologous recombination. May regulate the cleavage reactions of the branch-structured DNA. Has a very weak ATPase activity that is not stimulated by DNA. Binds DNA but does not promote DNA strands exchange. The protein is DNA repair and recombination protein RadB of Methanococcus maripaludis (strain C7 / ATCC BAA-1331).